The sequence spans 193 residues: ATP synthase subunit delta (193 aa).

Belongs to the ATPase delta chain family. As to quaternary structure, F-type ATPases have 2 components, F(1) - the catalytic core - and F(0) - the membrane proton channel. F(1) has five subunits: alpha(3), beta(3), gamma(1), delta(1), epsilon(1). F(0) has three main subunits: a(1), b(2) and c(10-14). The alpha and beta chains form an alternating ring which encloses part of the gamma chain. F(1) is attached to F(0) by a central stalk formed by the gamma and epsilon chains, while a peripheral stalk is formed by the delta and b chains.

It localises to the cell inner membrane. Its function is as follows. F(1)F(0) ATP synthase produces ATP from ADP in the presence of a proton or sodium gradient. F-type ATPases consist of two structural domains, F(1) containing the extramembraneous catalytic core and F(0) containing the membrane proton channel, linked together by a central stalk and a peripheral stalk. During catalysis, ATP synthesis in the catalytic domain of F(1) is coupled via a rotary mechanism of the central stalk subunits to proton translocation. Functionally, this protein is part of the stalk that links CF(0) to CF(1). It either transmits conformational changes from CF(0) to CF(1) or is implicated in proton conduction. The polypeptide is ATP synthase subunit delta (Allorhizobium ampelinum (strain ATCC BAA-846 / DSM 112012 / S4) (Agrobacterium vitis (strain S4))).